Consider the following 96-residue polypeptide: Cysteine proteinase (96 aa).

Cysteines 25 and 79 form a disulfide. Catalysis depends on residues H31 and N58.

Belongs to the peptidase C1 family.

This chain is Cysteine proteinase, found in Carica papaya (Papaya).